An 87-amino-acid chain; its full sequence is uncharacterized protein (87 aa).

The interval 43–87 is disordered; sequence NQGYGQNFGDASGFMGTRSHVDDRDQIDSPASFESEAVNSSIKRK.

This is an uncharacterized protein from Bacillus subtilis (strain 168).